The sequence spans 193 residues: Orotate phosphoribosyltransferase (193 aa).

114-122 (EDVITTGGS) lines the 5-phospho-alpha-D-ribose 1-diphosphate pocket. Orotate contacts are provided by Thr-118 and Arg-146.

Belongs to the purine/pyrimidine phosphoribosyltransferase family. PyrE subfamily. In terms of assembly, homodimer. The cofactor is Mg(2+).

The enzyme catalyses orotidine 5'-phosphate + diphosphate = orotate + 5-phospho-alpha-D-ribose 1-diphosphate. Its pathway is pyrimidine metabolism; UMP biosynthesis via de novo pathway; UMP from orotate: step 1/2. Functionally, catalyzes the transfer of a ribosyl phosphate group from 5-phosphoribose 1-diphosphate to orotate, leading to the formation of orotidine monophosphate (OMP). The protein is Orotate phosphoribosyltransferase of Chlorobium phaeobacteroides (strain DSM 266 / SMG 266 / 2430).